Here is a 287-residue protein sequence, read N- to C-terminus: Glycine--tRNA ligase alpha subunit (287 aa).

It belongs to the class-II aminoacyl-tRNA synthetase family. As to quaternary structure, tetramer of two alpha and two beta subunits.

The protein resides in the cytoplasm. It catalyses the reaction tRNA(Gly) + glycine + ATP = glycyl-tRNA(Gly) + AMP + diphosphate. The chain is Glycine--tRNA ligase alpha subunit from Campylobacter curvus (strain 525.92).